The chain runs to 114 residues: Probable 4-amino-4-deoxy-L-arabinose-phosphoundecaprenol flippase subunit ArnE (114 aa).

Transmembrane regions (helical) follow at residues 41–61 (GWLW…LLVL) and 68–88 (VAYP…HFVF). In terms of domain architecture, EamA spans 43-112 (LWLALFSLGL…VIGGVLLLSR (70 aa)).

It belongs to the ArnE family. In terms of assembly, heterodimer of ArnE and ArnF.

The protein localises to the cell inner membrane. Its pathway is bacterial outer membrane biogenesis; lipopolysaccharide biosynthesis. Functionally, translocates 4-amino-4-deoxy-L-arabinose-phosphoundecaprenol (alpha-L-Ara4N-phosphoundecaprenol) from the cytoplasmic to the periplasmic side of the inner membrane. This chain is Probable 4-amino-4-deoxy-L-arabinose-phosphoundecaprenol flippase subunit ArnE, found in Pseudomonas fluorescens (strain ATCC BAA-477 / NRRL B-23932 / Pf-5).